A 489-amino-acid chain; its full sequence is Poly(A) RNA polymerase GLD2 (489 aa).

Residues 93–118 (RQRFSCPSPHNQSARNSNFTSQPVTR) are disordered. Residues 100–116 (SPHNQSARNSNFTSQPV) are compositionally biased toward polar residues. Asp219 and Asp221 together coordinate Mg(2+). The 55-residue stretch at 386-440 (SLGDLFLGFLRYYATVFKWDKQVISVRMARTLPKSNCKEWKDKFICVEEPFNRTN) folds into the PAP-associated domain.

The protein belongs to the DNA polymerase type-B-like family. GLD2 subfamily. The cofactor is Mg(2+). Mn(2+) is required as a cofactor.

It is found in the cytoplasm. It carries out the reaction RNA(n) + ATP = RNA(n)-3'-adenine ribonucleotide + diphosphate. Cytoplasmic poly(A) RNA polymerase that adds successive AMP monomers to the 3'-end of specific RNAs, forming a poly(A) tail. In contrast to the canonical nuclear poly(A) RNA polymerase, it only adds poly(A) to selected cytoplasmic mRNAs. May not play a role in replication-dependent histone mRNA degradation. The sequence is that of Poly(A) RNA polymerase GLD2 from Danio rerio (Zebrafish).